Here is a 122-residue protein sequence, read N- to C-terminus: Acidic phospholipase A2 Tpu-E6c (122 aa).

7 disulfide bridges follow: Cys26–Cys115, Cys28–Cys44, Cys43–Cys95, Cys49–Cys122, Cys50–Cys88, Cys57–Cys81, and Cys75–Cys86. Ca(2+) contacts are provided by Tyr27, Gly29, and Gly31. His47 is a catalytic residue. Asp48 lines the Ca(2+) pocket. Residue Asp89 is part of the active site.

Monomer. Ca(2+) is required as a cofactor. As to expression, expressed by the venom gland.

Its subcellular location is the secreted. It catalyses the reaction a 1,2-diacyl-sn-glycero-3-phosphocholine + H2O = a 1-acyl-sn-glycero-3-phosphocholine + a fatty acid + H(+). Functionally, snake venom phospholipase A2 (PLA2) that impairs hemostasis. It weakly inhibits ADP-induced platelet aggregation when tested on platelet rich plasma from human and rabbit blood (15-25% of inhibition at 5-10 ug of enzyme), and dose-dependently inhibits blood coagulation, possibly by inhibiting thrombin activation. Exhibits high hydrolytic activities toward L-dipalmitoyl phosphatidylcholine. PLA2 catalyzes the calcium-dependent hydrolysis of the 2-acyl groups in 3-sn-phosphoglycerides. This Craspedocephalus puniceus (Flat-nosed pitviper) protein is Acidic phospholipase A2 Tpu-E6c.